The following is a 91-amino-acid chain: Cytochrome b-c1 complex subunit 6, mitochondrial (91 aa).

A mitochondrion-targeting transit peptide spans 1-13 (MGLEDEQKMLTES). Residues 1–30 (MGLEDEQKMLTESGDPEEEEEEEEELVDPL) form a disordered region. A compositionally biased stretch (acidic residues) spans 14–27 (GDPEEEEEEEEELV). 2 disulfides stabilise this stretch: Cys-37–Cys-81 and Cys-53–Cys-67. Lys-42 carries the N6-acetyllysine modification. At Lys-85 the chain carries N6-acetyllysine.

It belongs to the UQCRH/QCR6 family. Component of the ubiquinol-cytochrome c oxidoreductase (cytochrome b-c1 complex, complex III, CIII), a multisubunit enzyme composed of 11 subunits. The complex is composed of 3 respiratory subunits cytochrome b, cytochrome c1 and Rieske protein UQCRFS1, 2 core protein subunits UQCRC1/QCR1 and UQCRC2/QCR2, and 6 low-molecular weight protein subunits UQCRH/QCR6, UQCRB/QCR7, UQCRQ/QCR8, UQCR10/QCR9, UQCR11/QCR10 and subunit 9, the cleavage product of Rieske protein UQCRFS1. The complex exists as an obligatory dimer and forms supercomplexes (SCs) in the inner mitochondrial membrane with NADH-ubiquinone oxidoreductase (complex I, CI) and cytochrome c oxidase (complex IV, CIV), resulting in different assemblies (supercomplex SCI(1)III(2)IV(1) and megacomplex MCI(2)III(2)IV(2)).

It localises to the mitochondrion inner membrane. Functionally, component of the ubiquinol-cytochrome c oxidoreductase, a multisubunit transmembrane complex that is part of the mitochondrial electron transport chain which drives oxidative phosphorylation. The respiratory chain contains 3 multisubunit complexes succinate dehydrogenase (complex II, CII), ubiquinol-cytochrome c oxidoreductase (cytochrome b-c1 complex, complex III, CIII) and cytochrome c oxidase (complex IV, CIV), that cooperate to transfer electrons derived from NADH and succinate to molecular oxygen, creating an electrochemical gradient over the inner membrane that drives transmembrane transport and the ATP synthase. The cytochrome b-c1 complex catalyzes electron transfer from ubiquinol to cytochrome c, linking this redox reaction to translocation of protons across the mitochondrial inner membrane, with protons being carried across the membrane as hydrogens on the quinol. In the process called Q cycle, 2 protons are consumed from the matrix, 4 protons are released into the intermembrane space and 2 electrons are passed to cytochrome c. The protein is Cytochrome b-c1 complex subunit 6, mitochondrial (UQCRH) of Homo sapiens (Human).